We begin with the raw amino-acid sequence, 276 residues long: O-methyltransferase cnsE (276 aa).

S-adenosyl-L-methionine is bound by residues Gln-110, 133–134 (DA), and His-155.

Belongs to the methyltransferase superfamily. S-adenosyl-L-methionine serves as cofactor.

The protein operates within alkaloid biosynthesis. In terms of biological role, O-methyltransferase; part of the gene cluster that mediates the biosynthesis of communesins, a prominent class of indole alkaloids with great potential as pharmaceuticals. Communesins are biosynthesized by the coupling of tryptamine and aurantioclavine, two building blocks derived from L-tryptophan. The L-tryptophan decarboxylase cnsB converts L-tryptophan to tryptamine, whereas the tryptophan dimethylallyltransferase cnsF converts L-tryptophan to 4-dimethylallyl tryptophan which is further transformed to aurantioclavine by the aurantioclavine synthase cnsA, probably aided by the catalase cnsD. The cytochrome P450 monooxygenase cnsC catalyzes the heterodimeric coupling between the two different indole moieties, tryptamine and aurantioclavine, to construct vicinal quaternary stereocenters and yield the heptacyclic communesin scaffold. The O-methyltransferase cnsE then methylates the communesin scaffold to produce communesin K, the simplest characterized communesin that contains the heptacyclic core. The dioxygenase cnsJ converts communesin K into communesin I. Acylation to introduce the hexadienyl group at position N16 of communesin I by the acyltransferase cnsK leads to the production of communesin B. The hexadienyl group is produced by the highly reducing polyketide synthase cnsI, before being hydrolytically removed from cnsI by the serine hydrolase cnsH, converted into hexadienyl-CoA by the CoA ligase cnsG, and then transferred to communesin I by cnsK. Surprisingly, cnsK may also be a promiscuous acyltransferase that can tolerate a range of acyl groups, including acetyl-, propionyl-, and butyryl-CoA, which lead to communesins A, G and H respectively. The roles of the alpha-ketoglutarate-dependent dioxygenases cnsM and cnsP have still to be determined. This Penicillium expansum (Blue mold rot fungus) protein is O-methyltransferase cnsE.